The primary structure comprises 1051 residues: Lateral signaling target protein 2 homolog (1051 aa).

Disordered regions lie at residues 305–440 (PLGS…DEDL), 516–552 (GSNA…PSTS), 566–703 (HLPS…NASS), and 837–968 (IDLA…DGKA). Positions 319–358 (NNTSSSTSNNNNNNNNNSSSSSSSSSGSGSNTAKTSTSST) are enriched in low complexity. Over residues 360 to 370 (KAVERLVDHRN) the composition is skewed to basic and acidic residues. Over residues 371-391 (NNSSTVAGATQPSTARSPSML) the composition is skewed to polar residues. 2 stretches are compositionally biased toward low complexity: residues 392–401 (SLSAGSTPTA) and 409–428 (PSHS…NPPA). Positions 518–528 (NAATERQQQQQ) are enriched in polar residues. 2 stretches are compositionally biased toward low complexity: residues 533 to 549 (LQPG…QDEP) and 568 to 582 (PSSS…SSNQ). A phosphoserine mark is found at S569 and S570. Positions 583–596 (QTTIKTPNGNQSMP) are enriched in polar residues. Low complexity predominate over residues 597-606 (NSSSSSSNHN). 2 stretches are compositionally biased toward basic residues: residues 607–637 (NNRH…HPHH) and 650–672 (HHHH…ARKR). The span at 692-703 (TPGSADTSNASS) shows a compositional bias: polar residues. A compositionally biased stretch (low complexity) spans 840-852 (ASGNNNGNSNAAA). Residue S861 is modified to Phosphoserine. Composition is skewed to low complexity over residues 879–924 (QQQQ…SPIS) and 937–960 (SSIG…MSPP). An FYVE-type zinc finger spans residues 965-1025 (DGKAPRCMSC…VCRECYVREV (61 aa)). Zn(2+)-binding residues include C971, C974, C987, C990, C995, C998, C1017, and C1020. A disordered region spans residues 1028-1051 (SRQAPAQPSQAHGQASRPQAASAS).

Belongs to the lst-2 family.

Functionally, negative regulator of epidermal growth factor receptor (EGFR) signaling. This is Lateral signaling target protein 2 homolog from Drosophila mojavensis (Fruit fly).